The sequence spans 317 residues: Putrescine transport system permease protein PotH (317 aa).

Topologically, residues 1-31 (MSTLEPAAQSKPPGGFKLWLSQLQMKHGRKL) are cytoplasmic. A helical membrane pass occupies residues 32–51 (VIALPYIWLILLFLLPFLIV). The Periplasmic portion of the chain corresponds to 52-104 (FKISLAEMARAIPPYTELMEWADGQLSITLNLGNFLQLTDDPLYFDAYLQSLQ). The ABC transmembrane type-1 domain occupies 99–305 (YLQSLQVAAI…LLLIVPIMWF (207 aa)). A helical transmembrane segment spans residues 105–124 (VAAISTFCCLLIGYPLAWAV). The Cytoplasmic portion of the chain corresponds to 125 to 133 (AHSKPSTRN). The helical transmembrane segment at 134-153 (ILLLLVILPSWTSFLIRVYA) threads the bilayer. The Periplasmic portion of the chain corresponds to 154-184 (WMGILKNNGVLNNFLLWLGVIDQPLTILHTN). Residues 185 to 204 (LAVYIGIVYAYVPFMVLPIY) form a helical membrane-spanning segment. Residues 205–239 (TALIRIDYSLVEAALDLGARPLKTFFTVIVPLTKG) are Cytoplasmic-facing. Residues 240–259 (GIIAGSMLVFIPAVGEFVIP) traverse the membrane as a helical segment. At 260–284 (ELLGGPDSIMIGRVLWQEFFNNRDW) the chain is on the periplasmic side. Residues 285–304 (PVASAVAIIMLLLLIVPIMW) traverse the membrane as a helical segment. Over 305 to 317 (FHKHQQKSVGEHG) the chain is Cytoplasmic.

Belongs to the binding-protein-dependent transport system permease family. CysTW subfamily. As to quaternary structure, the complex is composed of two ATP-binding proteins (PotG), two transmembrane proteins (PotH and PotI) and a solute-binding protein (PotF).

It localises to the cell inner membrane. Its activity is regulated as follows. Transport is feedback inhibited by intracellular polyamines. In terms of biological role, part of the ABC transporter complex PotFGHI involved in putrescine uptake. Responsible for the translocation of the substrate across the membrane. Imports putrescine for maintenance of the optimal concentration of polyamines necessary for cell growth in the presence of glucose. The chain is Putrescine transport system permease protein PotH from Escherichia coli (strain K12).